A 434-amino-acid chain; its full sequence is Enolase A (434 aa).

2 residues coordinate substrate: H160 and E169. Catalysis depends on E212, which acts as the Proton donor. Mg(2+) contacts are provided by D247, E296, and D321. 2 residues coordinate substrate: E296 and D321. Residue K346 is the Proton acceptor of the active site. Residues 373–376 (SHRS) and K397 contribute to the substrate site.

Belongs to the enolase family. In terms of assembly, homodimer. Mg(2+) serves as cofactor.

The protein localises to the cytoplasm. It carries out the reaction (2R)-2-phosphoglycerate = phosphoenolpyruvate + H2O. The protein operates within carbohydrate degradation; glycolysis; pyruvate from D-glyceraldehyde 3-phosphate: step 4/5. The sequence is that of Enolase A (enoA) from Dictyostelium discoideum (Social amoeba).